Here is a 386-residue protein sequence, read N- to C-terminus: Succinate--CoA ligase [ADP-forming] subunit beta (386 aa).

The ATP-grasp domain maps to 9–244; sequence KEILRKYGVP…HDEEDPLETR (236 aa). Residues K46, 53-55, E99, C102, and E107 each bind ATP; that span reads GRG. 2 residues coordinate Mg(2+): N199 and D213. Residues N264 and 321-323 contribute to the substrate site; that span reads GIM.

Belongs to the succinate/malate CoA ligase beta subunit family. As to quaternary structure, heterotetramer of two alpha and two beta subunits. Requires Mg(2+) as cofactor.

The enzyme catalyses succinate + ATP + CoA = succinyl-CoA + ADP + phosphate. It catalyses the reaction GTP + succinate + CoA = succinyl-CoA + GDP + phosphate. The protein operates within carbohydrate metabolism; tricarboxylic acid cycle; succinate from succinyl-CoA (ligase route): step 1/1. Its function is as follows. Succinyl-CoA synthetase functions in the citric acid cycle (TCA), coupling the hydrolysis of succinyl-CoA to the synthesis of either ATP or GTP and thus represents the only step of substrate-level phosphorylation in the TCA. The beta subunit provides nucleotide specificity of the enzyme and binds the substrate succinate, while the binding sites for coenzyme A and phosphate are found in the alpha subunit. The sequence is that of Succinate--CoA ligase [ADP-forming] subunit beta from Rickettsia prowazekii (strain Madrid E).